Reading from the N-terminus, the 370-residue chain is Alanine racemase (370 aa).

The active-site Proton acceptor; specific for D-alanine is the Lys-36. Lys-36 bears the N6-(pyridoxal phosphate)lysine mark. Arg-134 is a substrate binding site. Catalysis depends on Tyr-265, which acts as the Proton acceptor; specific for L-alanine. Met-313 serves as a coordination point for substrate.

It belongs to the alanine racemase family. Pyridoxal 5'-phosphate serves as cofactor.

The catalysed reaction is L-alanine = D-alanine. Its pathway is amino-acid biosynthesis; D-alanine biosynthesis; D-alanine from L-alanine: step 1/1. Its function is as follows. Catalyzes the interconversion of L-alanine and D-alanine. May also act on other amino acids. This Desulforamulus reducens (strain ATCC BAA-1160 / DSM 100696 / MI-1) (Desulfotomaculum reducens) protein is Alanine racemase (alr).